The primary structure comprises 586 residues: Exopolysaccharide phosphotransferase SCO6023 (586 aa).

It belongs to the stealth family.

This Streptomyces coelicolor (strain ATCC BAA-471 / A3(2) / M145) protein is Exopolysaccharide phosphotransferase SCO6023.